A 490-amino-acid polypeptide reads, in one-letter code: GTPase Der (490 aa).

EngA-type G domains lie at 3–166 (PVVA…AEAM) and 200–373 (IKLA…DSAT). Residues 9-16 (GRPNVGKS), 56-60 (DTGGI), 118-121 (NKVD), 206-213 (GKPNVGKS), 253-257 (DTAGV), and 318-321 (NKWD) contribute to the GTP site. The 85-residue stretch at 374–458 (RRVSTSMLTR…PIQLRFQEGG (85 aa)) folds into the KH-like domain. Positions 470–490 (TVSQERRRKRMVGHIRDKNKD) are disordered.

This sequence belongs to the TRAFAC class TrmE-Era-EngA-EngB-Septin-like GTPase superfamily. EngA (Der) GTPase family. As to quaternary structure, associates with the 50S ribosomal subunit.

Functionally, GTPase that plays an essential role in the late steps of ribosome biogenesis. The polypeptide is GTPase Der (Shewanella pealeana (strain ATCC 700345 / ANG-SQ1)).